The following is a 142-amino-acid chain: Class II hydrophobin 7 (142 aa).

An N-terminal signal peptide occupies residues 1–16; the sequence is MKFLTVAIVLAAAASA. Cystine bridges form between Cys73-Cys123, Cys84-Cys114, Cys85-Cys97, and Cys124-Cys135.

The protein belongs to the cerato-ulmin hydrophobin family. Homodimer. Homodimers further self-assemble to form highly ordered films at water-air interfaces through intermolecular interactions.

It localises to the secreted. It is found in the cell wall. In terms of biological role, aerial growth, conidiation, and dispersal of filamentous fungi in the environment rely upon a capability of their secreting small amphipathic proteins called hydrophobins (HPBs) with low sequence identity. Class I can self-assemble into an outermost layer of rodlet bundles on aerial cell surfaces, conferring cellular hydrophobicity that supports fungal growth, development and dispersal; whereas Class II form highly ordered films at water-air interfaces through intermolecular interactions but contribute nothing to the rodlet structure. In Trichoderma asperellum (strain ATCC 204424 / CBS 433.97 / NBRC 101777), this protein is Class II hydrophobin 7.